Reading from the N-terminus, the 1141-residue chain is Serine-aspartate repeat-containing protein E (1141 aa).

The N-terminal stretch at 1-52 is a signal peptide; the sequence is MINRDNKKAITKKGMISNRLNKFSIRKYTVGTASILVGTTLIFGLGNQEAKA. The short motif at 23 to 34 is the YSIRK-G/S signaling motif element; it reads FSIRKYTVGTAS. A ligand binding A region region spans residues 53–601; it reads AENTSTENAK…GDGTVKPEEK (549 aa). Residues 54-248 are disordered; sequence ENTSTENAKQ…RSTKPVATAP (195 aa). A compositionally biased stretch (basic and acidic residues) spans 61–75; sequence AKQDDATTSDNKEVV. Over residues 77-90 the composition is skewed to low complexity; that stretch reads ETENNSTTENDSTN. Residues 92 to 108 show a composition bias toward basic and acidic residues; sequence IKKETNTDSQPEAKEES. Residues 109-126 show a composition bias toward low complexity; the sequence is TTSSTQQQQNNVTATTET. The segment covering 130–145 has biased composition (basic and acidic residues); the sequence is NIEKENVKPSTDKTAT. Polar residues predominate over residues 159–207; sequence NYTNNDVTTKPSTSEIQTKPTTPQESTNIENSQPQPTPSKVDNQVTDAT. The segment covering 216 to 241 has biased composition (basic and acidic residues); that stretch reads SKEELKNNPEKLKELVRNDNNTDRST. 3 consecutive CNA-B domains span residues 602 to 714, 715 to 824, and 825 to 935; these read LYKI…YKEP, KYNL…YKTP, and KYSL…EEDT. The interval 899–1117 is disordered; sequence VTNTTEDDKD…GSENNGSNNA (219 aa). Composition is skewed to acidic residues over residues 903–913 and 930–1080; these read TEDDKDADGGE and YFEE…DSDS. The LPXTG sorting signal signature appears at 1104–1108; it reads LPETG. Position 1107 is a pentaglycyl murein peptidoglycan amidated threonine (T1107). Residues 1108 to 1141 constitute a propeptide, removed by sortase; the sequence is GSENNGSNNATLFGGLFAALGSLLLFGRRKKQNK.

The protein belongs to the serine-aspartate repeat-containing protein (SDr) family. Interacts with host complement factor H/CFAH (via C-terminus). Interacts with host complement regulator C4BPA.

It is found in the secreted. Its subcellular location is the cell wall. In terms of biological role, cell surface-associated calcium-binding protein which plays an important role in adhesion and pathogenesis. Contributes to the resistance to killing by innate immune components in blood and thus attenuates bacterial clearance by interacting with host complement factor H/CFAH and modulating its activity. Also inhibits bacterial opsonization and killing by interacting with host complement regulator C4BPA and thus inhibiting classical complement pathway activation. This Staphylococcus aureus (strain N315) protein is Serine-aspartate repeat-containing protein E (sdrE).